Consider the following 117-residue polypeptide: Large ribosomal subunit protein bL20 (117 aa).

It belongs to the bacterial ribosomal protein bL20 family.

Its function is as follows. Binds directly to 23S ribosomal RNA and is necessary for the in vitro assembly process of the 50S ribosomal subunit. It is not involved in the protein synthesizing functions of that subunit. The protein is Large ribosomal subunit protein bL20 (rplT) of Rickettsia prowazekii (strain Madrid E).